Reading from the N-terminus, the 66-residue chain is MIIPIRCFTCGAVVADKWEPFSNRVMGGEDPEKVLTELGVNRYCCRRMLLSHVNIIREIIHYTRPI.

Positions 7, 10, 44, and 45 each coordinate Zn(2+).

This sequence belongs to the archaeal Rpo10/eukaryotic RPB10 RNA polymerase subunit family. Part of the 13-subunit RNA polymerase complex. Zn(2+) serves as cofactor.

It is found in the cytoplasm. The enzyme catalyses RNA(n) + a ribonucleoside 5'-triphosphate = RNA(n+1) + diphosphate. DNA-dependent RNA polymerase (RNAP) catalyzes the transcription of DNA into RNA using the four ribonucleoside triphosphates as substrates. This Sulfolobus acidocaldarius (strain ATCC 33909 / DSM 639 / JCM 8929 / NBRC 15157 / NCIMB 11770) protein is DNA-directed RNA polymerase subunit Rpo10.